We begin with the raw amino-acid sequence, 303 residues long: Recombination-associated protein RdgC (303 aa).

Belongs to the RdgC family.

It is found in the cytoplasm. The protein localises to the nucleoid. Functionally, may be involved in recombination. This chain is Recombination-associated protein RdgC, found in Edwardsiella ictaluri (strain 93-146).